The sequence spans 124 residues: Large ribosomal subunit protein bL12 (124 aa).

It belongs to the bacterial ribosomal protein bL12 family. Homodimer. Part of the ribosomal stalk of the 50S ribosomal subunit. Forms a multimeric L10(L12)X complex, where L10 forms an elongated spine to which 2 to 4 L12 dimers bind in a sequential fashion. Binds GTP-bound translation factors.

Functionally, forms part of the ribosomal stalk which helps the ribosome interact with GTP-bound translation factors. Is thus essential for accurate translation. The protein is Large ribosomal subunit protein bL12 of Dehalococcoides mccartyi (strain ATCC BAA-2266 / KCTC 15142 / 195) (Dehalococcoides ethenogenes (strain 195)).